A 504-amino-acid chain; its full sequence is Acetylcholine receptor subunit epsilon (504 aa).

Residues 1–19 form the signal peptide; sequence MESGVRILSLLILLHNSLA. Residues 20–240 are Extracellular-facing; that stretch reads SESEESRLIK…IVFNLIIQRK (221 aa). Residues Asn-88 and Asn-161 are each glycosylated (N-linked (GlcNAc...) asparagine). Cys-148 and Cys-162 are disulfide-bonded. Residues 241–265 traverse the membrane as a helical segment; it reads PLFYIINIIVPCVLISFLVVLVYFL. Residues 266–273 lie on the Cytoplasmic side of the membrane; the sequence is PAKAGGQK. Residues 274-292 form a helical membrane-spanning segment; that stretch reads CTVSISVLLAQTVFLFLIA. Over 293-307 the chain is Extracellular; it reads QMVPETSLSVPLIGK. The chain crosses the membrane as a helical span at residues 308–329; sequence YLMFVMFVSTLIVLSCVIVLNV. At 330–473 the chain is on the cytoplasmic side; that stretch reads SLRSPSTHNL…WILIGKVLDV (144 aa). A helical transmembrane segment spans residues 474–497; sequence LCFWVALPLFVLGTLAIFLMGHFN. Residues 498 to 504 lie on the Extracellular side of the membrane; the sequence is TAPEHPF.

This sequence belongs to the ligand-gated ion channel (TC 1.A.9) family. Acetylcholine receptor (TC 1.A.9.1) subfamily. Epsilon/CHRNE sub-subfamily. Pentamer of two alpha chains, and one each of the beta, delta, and gamma (in immature muscle) or epsilon (in mature muscle) chains.

The protein resides in the postsynaptic cell membrane. It is found in the cell membrane. It catalyses the reaction K(+)(in) = K(+)(out). The enzyme catalyses Na(+)(in) = Na(+)(out). After binding acetylcholine, the AChR responds by an extensive change in conformation that affects all subunits and leads to opening of an ion-conducting channel across the plasma membrane. In Xenopus laevis (African clawed frog), this protein is Acetylcholine receptor subunit epsilon (chrne).